A 72-amino-acid chain; its full sequence is Large ribosomal subunit protein uL29 (72 aa).

Belongs to the universal ribosomal protein uL29 family.

The chain is Large ribosomal subunit protein uL29 from Rhodopirellula baltica (strain DSM 10527 / NCIMB 13988 / SH1).